The sequence spans 266 residues: 5'-nucleotidase SurE (266 aa).

Asp-8, Asp-9, Ser-39, and Asn-93 together coordinate a divalent metal cation.

The protein belongs to the SurE nucleotidase family. A divalent metal cation is required as a cofactor.

The protein resides in the cytoplasm. It catalyses the reaction a ribonucleoside 5'-phosphate + H2O = a ribonucleoside + phosphate. In terms of biological role, nucleotidase that shows phosphatase activity on nucleoside 5'-monophosphates. The chain is 5'-nucleotidase SurE from Thermococcus gammatolerans (strain DSM 15229 / JCM 11827 / EJ3).